A 190-amino-acid polypeptide reads, in one-letter code: PBP1-interacting protein LSM12 (190 aa).

The 68-residue stretch at 2–69 (PVCNNDSQLI…IKEVTALRDN (68 aa)) folds into the Sm domain. Positions 84 to 190 (PSMQAARDRS…ERVQKTLSKK (107 aa)) constitute an AD domain.

The protein belongs to the LSM12 family. Forms a complex composed of at least MKT1, PBP1, XAC1 and LSM12. Forms a complex composed of at least MKT1L, PBP1, XAC1 and LSM12. Within the complex, interacts with PBP1; the interaction is direct.

Involved in post-transcriptional regulation of gene expression. The protein is PBP1-interacting protein LSM12 of Trypanosoma brucei brucei (strain 927/4 GUTat10.1).